The primary structure comprises 1293 residues: Putative DNA-directed RNA polymerase 008R (1293 aa).

Zn(2+) is bound by residues cysteine 61, cysteine 64, cysteine 71, histidine 74, cysteine 99, cysteine 102, and cysteine 123. The DNA-binding element occupies 270–339 (TNRKPMAGIK…PVMVTPFNVS (70 aa)). Over residues 354 to 376 (EMRDGTVHRPSEWRPSHGDHMET) the composition is skewed to basic and acidic residues. A disordered region spans residues 354-390 (EMRDGTVHRPSEWRPSHGDHMETADGSPLGRVTRPSY). Positions 474, 476, and 478 each coordinate Mg(2+). The alpha-amanitin binding stretch occupies residues 724 to 734 (GQQYVGGSRPG). The tract at residues 776–788 (PREVFFHAKSGRE) is bridging helix.

It belongs to the RNA polymerase beta' chain family.

It catalyses the reaction RNA(n) + a ribonucleoside 5'-triphosphate = RNA(n+1) + diphosphate. Functionally, component of the DNA-dependent RNA polymerase that catalyzes the transcription of DNA into RNA using the four ribonucleoside triphosphates as substrates. Largest and catalytic component of RNA polymerase II which synthesizes mRNA precursors and many functional non-coding RNAs. Forms the polymerase active center together with the second largest subunit. The protein is Putative DNA-directed RNA polymerase 008R of Frog virus 3 (isolate Goorha) (FV-3).